The primary structure comprises 357 residues: UDP-N-acetylglucosamine--N-acetylmuramyl-(pentapeptide) pyrophosphoryl-undecaprenol N-acetylglucosamine transferase (357 aa).

Residues 15-17, Asn124, Arg165, Ser194, and Gln288 each bind UDP-N-acetyl-alpha-D-glucosamine; that span reads TGG.

This sequence belongs to the glycosyltransferase 28 family. MurG subfamily.

Its subcellular location is the cell inner membrane. It catalyses the reaction di-trans,octa-cis-undecaprenyl diphospho-N-acetyl-alpha-D-muramoyl-L-alanyl-D-glutamyl-meso-2,6-diaminopimeloyl-D-alanyl-D-alanine + UDP-N-acetyl-alpha-D-glucosamine = di-trans,octa-cis-undecaprenyl diphospho-[N-acetyl-alpha-D-glucosaminyl-(1-&gt;4)]-N-acetyl-alpha-D-muramoyl-L-alanyl-D-glutamyl-meso-2,6-diaminopimeloyl-D-alanyl-D-alanine + UDP + H(+). The protein operates within cell wall biogenesis; peptidoglycan biosynthesis. Its function is as follows. Cell wall formation. Catalyzes the transfer of a GlcNAc subunit on undecaprenyl-pyrophosphoryl-MurNAc-pentapeptide (lipid intermediate I) to form undecaprenyl-pyrophosphoryl-MurNAc-(pentapeptide)GlcNAc (lipid intermediate II). The polypeptide is UDP-N-acetylglucosamine--N-acetylmuramyl-(pentapeptide) pyrophosphoryl-undecaprenol N-acetylglucosamine transferase (Nostoc punctiforme (strain ATCC 29133 / PCC 73102)).